Consider the following 500-residue polypeptide: L-arabinose isomerase (500 aa).

E306, E333, H350, and H450 together coordinate Mn(2+).

The protein belongs to the arabinose isomerase family. Homohexamer. Mn(2+) serves as cofactor.

The catalysed reaction is beta-L-arabinopyranose = L-ribulose. The protein operates within carbohydrate degradation; L-arabinose degradation via L-ribulose; D-xylulose 5-phosphate from L-arabinose (bacterial route): step 1/3. Its function is as follows. Catalyzes the conversion of L-arabinose to L-ribulose. This Salmonella newport (strain SL254) protein is L-arabinose isomerase.